Here is a 692-residue protein sequence, read N- to C-terminus: Elongation factor G (692 aa).

One can recognise a tr-type G domain in the interval 8–282; sequence ENTRNIGIMA…AVIDYLPSPL (275 aa). GTP contacts are provided by residues 17–24, 81–85, and 135–138; these read AHIDAGKT, DTPGH, and NKMD.

The protein belongs to the TRAFAC class translation factor GTPase superfamily. Classic translation factor GTPase family. EF-G/EF-2 subfamily.

It is found in the cytoplasm. In terms of biological role, catalyzes the GTP-dependent ribosomal translocation step during translation elongation. During this step, the ribosome changes from the pre-translocational (PRE) to the post-translocational (POST) state as the newly formed A-site-bound peptidyl-tRNA and P-site-bound deacylated tRNA move to the P and E sites, respectively. Catalyzes the coordinated movement of the two tRNA molecules, the mRNA and conformational changes in the ribosome. The protein is Elongation factor G of Bacillus thuringiensis subsp. konkukian (strain 97-27).